Reading from the N-terminus, the 331-residue chain is UDP-GalNAc:beta-1,3-N-acetylgalactosaminyltransferase 1 (331 aa).

Residues 1 to 20 are Cytoplasmic-facing; the sequence is MAPAVLTAIPNRMSLRSLKW. Residues 21–43 traverse the membrane as a helical; Signal-anchor for type II membrane protein segment; sequence SLLLLSLLSFLVIWYLSLPHYNV. Residues 44–331 are Lumenal-facing; sequence IERVNWMYFY…VMLRNTTCHY (288 aa). N72, N154, N198, N212, and N326 each carry an N-linked (GlcNAc...) asparagine glycan.

It belongs to the glycosyltransferase 31 family. Mg(2+) serves as cofactor.

It is found in the golgi apparatus membrane. The enzyme catalyses a globoside Gb3Cer (d18:1(4E)) + UDP-N-acetyl-alpha-D-galactosamine = a globoside Gb4Cer (d18:1(4E)) + UDP + H(+). Its pathway is protein modification; protein glycosylation. In terms of biological role, transfers N-acetylgalactosamine onto globotriaosylceramide. Plays a critical role in preimplantation stage embryonic development. The chain is UDP-GalNAc:beta-1,3-N-acetylgalactosaminyltransferase 1 (B3galnt1) from Rattus norvegicus (Rat).